Consider the following 298-residue polypeptide: Olfactory receptor 5AK3 (298 aa).

The Extracellular segment spans residues 1-25; sequence MGRGNSTEVTEFHLLGFGVQHEFQH. N-linked (GlcNAc...) asparagine glycosylation occurs at asparagine 5. The helical transmembrane segment at 26–46 threads the bilayer; the sequence is VLFIVLLLIYVTSLIGNIGMI. The Cytoplasmic segment spans residues 47 to 54; it reads LLIKTDSR. Residues 55-75 form a helical membrane-spanning segment; the sequence is LQTPMYFFPQHLAFVDICYTS. At 76–99 the chain is on the extracellular side; the sequence is AITPKMLQSFTEENNLITFRGCVI. Cysteine 97 and cysteine 189 are disulfide-bonded. The chain crosses the membrane as a helical span at residues 100-120; the sequence is QFLVYATFATSDCYLLAIMAM. The Cytoplasmic segment spans residues 121 to 133; that stretch reads DCYVAICKPLRYP. A helical membrane pass occupies residues 134–154; it reads MIMSQTVYIQLVAGSYIIGSI. N-linked (GlcNAc...) asparagine glycosylation is present at asparagine 155. Residues 155-196 lie on the Extracellular side of the membrane; that stretch reads NASVHTGFTFSLSFCKSNKINHFFCDGLPILALSCSNIDINI. The helical transmembrane segment at 197–217 threads the bilayer; the sequence is ILDVVFVGFDLMFTELVIIFS. The Cytoplasmic portion of the chain corresponds to 218–237; the sequence is YIYIMVTILKMSSTAGRKKS. Residues 238 to 258 form a helical membrane-spanning segment; sequence FSTCASHLTAVTIFYGTLSYM. At 259–271 the chain is on the extracellular side; sequence YLQPQSNNSQENM. Asparagine 265 carries an N-linked (GlcNAc...) asparagine glycan. The helical transmembrane segment at 272–292 threads the bilayer; the sequence is KVASIFYGTVIPMLNPLIYSL. Residues 293–298 are Cytoplasmic-facing; the sequence is RNKEGK.

The protein belongs to the G-protein coupled receptor 1 family.

It is found in the cell membrane. Functionally, odorant receptor. This is Olfactory receptor 5AK3 (OR5AK3P) from Homo sapiens (Human).